We begin with the raw amino-acid sequence, 130 residues long: Fluoride-specific ion channel FluC (130 aa).

Transmembrane regions (helical) follow at residues 9 to 29, 39 to 59, 71 to 91, and 104 to 124; these read LAII…TIFL, YATF…VTLA, LLLA…ALEV, and VLYG…GSLI. Na(+)-binding residues include G79 and T82.

The protein belongs to the fluoride channel Fluc/FEX (TC 1.A.43) family.

It localises to the cell inner membrane. It catalyses the reaction fluoride(in) = fluoride(out). With respect to regulation, na(+) is not transported, but it plays an essential structural role and its presence is essential for fluoride channel function. Fluoride-specific ion channel. Important for reducing fluoride concentration in the cell, thus reducing its toxicity. The protein is Fluoride-specific ion channel FluC of Synechocystis sp. (strain ATCC 27184 / PCC 6803 / Kazusa).